The sequence spans 504 residues: Dimethylsulfoniopropionate lyase 5 (504 aa).

Belongs to the aspartate/glutamate racemases family. ALMA1 subfamily. Homotetramer.

The enzyme catalyses S,S-dimethyl-beta-propiothetin = acrylate + dimethyl sulfide + H(+). Functionally, mediates cleavage of dimethylsulfoniopropionate (DMSP) into dimethyl sulfide (DMS) and acrylate. DMS is the principal form by which sulfur is transported from oceans to the atmosphere and is a key component of the ocean sulfur cycle. This is Dimethylsulfoniopropionate lyase 5 from Emiliania huxleyi (strain CCMP1516).